We begin with the raw amino-acid sequence, 134 residues long: Mediator of RNA polymerase II transcription subunit 10 (134 aa).

This sequence belongs to the Mediator complex subunit 10 family. In terms of assembly, component of the Mediator complex.

It localises to the nucleus. In terms of biological role, component of the Mediator complex, a coactivator involved in the regulated transcription of nearly all RNA polymerase II-dependent genes. Mediator functions as a bridge to convey information from gene-specific regulatory proteins to the basal RNA polymerase II transcription machinery. Mediator is recruited to promoters by direct interactions with regulatory proteins and serves as a scaffold for the assembly of a functional preinitiation complex with RNA polymerase II and the general transcription factors. Negatively regulates the Wnt signaling pathway and positively regulates the Nodal signaling pathway. Required for cardiac cushion formation. The sequence is that of Mediator of RNA polymerase II transcription subunit 10 (med10) from Danio rerio (Zebrafish).